A 236-amino-acid chain; its full sequence is Translocon-associated protein subunit alpha (236 aa).

An N-terminal signal peptide occupies residues 1–20 (MNKLITLLLAVLMIISCVYS). Over 21 to 163 (DDVEITDDEV…TEKETSFDMD (143 aa)) the chain is Lumenal. N-linked (GlcNAc...) asparagine glycans are attached at residues Asn-74, Asn-94, Asn-141, Asn-148, and Asn-152. A helical transmembrane segment spans residues 164-184 (SFFLILLGLGFVGGIGYIVYG). At 185 to 236 (KMPKQKKVRTVSKVNKNAVRVETEDETAEWLSGTSAASSKVKSVQKVVKKNK) the chain is on the cytoplasmic side.

It belongs to the TRAP-alpha family. As to quaternary structure, heterotrimer of TRAP-alpha, TRAP-beta and TRAP-gamma. In terms of processing, phosphorylated in its cytoplasmic tail.

It localises to the endoplasmic reticulum membrane. Its function is as follows. TRAP proteins are part of a complex whose function is to bind calcium to the ER membrane and thereby regulate the retention of ER resident proteins. This chain is Translocon-associated protein subunit alpha (ssr1), found in Dictyostelium discoideum (Social amoeba).